A 196-amino-acid polypeptide reads, in one-letter code: DnaA initiator-associating protein DiaA (196 aa).

The SIS domain occupies 34 to 196; sequence MVQSLLNGNK…DNTLFPHQND (163 aa).

The protein belongs to the SIS family. DiaA subfamily. Homotetramer; dimer of dimers.

Its function is as follows. Required for the timely initiation of chromosomal replication via direct interactions with the DnaA initiator protein. The sequence is that of DnaA initiator-associating protein DiaA from Pectobacterium carotovorum subsp. carotovorum (strain PC1).